A 617-amino-acid polypeptide reads, in one-letter code: V-type proton ATPase catalytic subunit A (617 aa).

257–264 is a binding site for ATP; it reads GAFGCGKT.

This sequence belongs to the ATPase alpha/beta chains family. In terms of assembly, V-ATPase is a heteromultimeric enzyme composed of a peripheral catalytic V1 complex (components A to H) attached to an integral membrane V0 proton pore complex (components: a, c, c', c'', d, e, f and VOA1). Is a probable target for sumoylation.

It is found in the vacuole membrane. It catalyses the reaction ATP + H2O + 4 H(+)(in) = ADP + phosphate + 5 H(+)(out). Functionally, catalytic subunit of the V1 complex of vacuolar(H+)-ATPase (V-ATPase), a multisubunit enzyme composed of a peripheral complex (V1) that hydrolyzes ATP and a membrane integral complex (V0) that translocates protons. V-ATPase is responsible for acidifying and maintaining the pH of intracellular compartments. Mediates oxidative stress response, filamentous growth, and plays an important role in virulence. The sequence is that of V-type proton ATPase catalytic subunit A from Candida albicans (strain SC5314 / ATCC MYA-2876) (Yeast).